The primary structure comprises 150 residues: Peptide deformylase 1 (150 aa).

2 residues coordinate Fe cation: Cys-88 and His-130. Glu-131 is an active-site residue. His-134 provides a ligand contact to Fe cation.

It belongs to the polypeptide deformylase family. Requires Fe(2+) as cofactor.

The catalysed reaction is N-terminal N-formyl-L-methionyl-[peptide] + H2O = N-terminal L-methionyl-[peptide] + formate. Removes the formyl group from the N-terminal Met of newly synthesized proteins. Requires at least a dipeptide for an efficient rate of reaction. N-terminal L-methionine is a prerequisite for activity but the enzyme has broad specificity at other positions. The chain is Peptide deformylase 1 from Clostridium acetobutylicum (strain ATCC 824 / DSM 792 / JCM 1419 / IAM 19013 / LMG 5710 / NBRC 13948 / NRRL B-527 / VKM B-1787 / 2291 / W).